We begin with the raw amino-acid sequence, 92 residues long: Small ribosomal subunit protein uS19c (92 aa).

The protein belongs to the universal ribosomal protein uS19 family.

The protein resides in the plastid. The protein localises to the chloroplast. In terms of biological role, protein S19 forms a complex with S13 that binds strongly to the 16S ribosomal RNA. The polypeptide is Small ribosomal subunit protein uS19c (Illicium oligandrum (Star anise)).